The primary structure comprises 64 residues: Large ribosomal subunit protein bL33c (64 aa).

Belongs to the bacterial ribosomal protein bL33 family.

The protein resides in the plastid. The protein localises to the chloroplast. The protein is Large ribosomal subunit protein bL33c (rpl33) of Cyanidium caldarium (Red alga).